We begin with the raw amino-acid sequence, 404 residues long: uncharacterized protein (404 aa).

A signal peptide spans 1-21; sequence MRKLGLALSIMGLLLVSIVAG. Cysteine 22 carries the post-translational modification N-acetylcysteine. Residue cysteine 22 is the site of S-archaeol cysteine attachment.

Belongs to the BMP lipoprotein family.

The protein localises to the cell membrane. This is an uncharacterized protein from Pyrococcus abyssi (strain GE5 / Orsay).